Here is a 216-residue protein sequence, read N- to C-terminus: Cell envelope integrity protein Cei (216 aa).

Residues 25 to 45 (PAIVVVAFLVVVTCVMWTLAL) traverse the membrane as a helical segment.

The protein localises to the cell membrane. Contributes to cell envelope integrity and virulence. The sequence is that of Cell envelope integrity protein Cei from Mycobacterium tuberculosis (strain ATCC 25618 / H37Rv).